A 462-amino-acid chain; its full sequence is L-seryl-tRNA(Sec) selenium transferase (462 aa).

N6-(pyridoxal phosphate)lysine is present on Lys-293.

It belongs to the SelA family. Pyridoxal 5'-phosphate serves as cofactor.

It localises to the cytoplasm. It carries out the reaction L-seryl-tRNA(Sec) + selenophosphate + H(+) = L-selenocysteinyl-tRNA(Sec) + phosphate. It participates in aminoacyl-tRNA biosynthesis; selenocysteinyl-tRNA(Sec) biosynthesis; selenocysteinyl-tRNA(Sec) from L-seryl-tRNA(Sec) (bacterial route): step 1/1. Converts seryl-tRNA(Sec) to selenocysteinyl-tRNA(Sec) required for selenoprotein biosynthesis. The polypeptide is L-seryl-tRNA(Sec) selenium transferase (Clostridium botulinum (strain Loch Maree / Type A3)).